Here is a 364-residue protein sequence, read N- to C-terminus: MERGKKKRISNKLQQTFHHSKEPTFLINQAGLLSSDSYSSLSPETESVNPGENIKTDTQKKRPGTVILSKLSSRRIISESQLSPPVIPARRPGFRVCYICGREFGSQSIAIHEPQCLQKWHIENSKLPKHLRRPEPSKPQSLSSSGSYSLQATNEAAFQSAQAQLLPCESCGRTFLPDHLLVHHRSCKPKGEGPRAPHSNSSDHLTGLKKACSGTPARPRTVICYICGKEFGTLSLPIHEPKCLEKWKMENDRLPVELHQPLPQKPQPLPNAQSSQAGPNQAQLVFCPHCSRIFTSDRLLVHQRSCKTHPYGPKYQNLNLGSKGGLKEYTNSKQQRNRAAPSVTDKVIHATQDALGEPGGALCL.

Over residues 1-10 (MERGKKKRIS) the composition is skewed to basic residues. 2 disordered regions span residues 1–21 (MERG…HHSK) and 37–60 (SYSS…DTQK). Residues 93–122 (GFRVCYICGREFGSQSIAIHEPQCLQKWHI) form a C2HC/C3H-type 1 zinc finger. 4 residues coordinate Zn(2+): Cys-97, Cys-100, His-112, and Cys-116. The disordered stretch occupies residues 127 to 147 (LPKHLRRPEPSKPQSLSSSGS). Positions 138 to 147 (KPQSLSSSGS) are enriched in low complexity. C2HC/C3H-type zinc fingers lie at residues 164 to 193 (QLLP…KGEG), 220 to 249 (RTVI…KWKM), and 283 to 312 (QLVF…HPYG). Zn(2+) contacts are provided by Cys-168, Cys-171, His-183, Cys-187, Cys-224, Cys-227, His-239, Cys-243, Cys-287, Cys-290, His-302, and Cys-306. Residues 187 to 214 (CKPKGEGPRAPHSNSSDHLTGLKKACSG) are disordered.

The cofactor is Zn(2+).

This Homo sapiens (Human) protein is Zinc finger protein 474 (ZNF474).